The following is a 230-amino-acid chain: 8-demethylnovobiocic acid C(8)-methyltransferase (230 aa).

The protein belongs to the methyltransferase superfamily.

The enzyme catalyses 8-desmethylnovobiocic acid + S-adenosyl-L-methionine = novobiocic acid + S-adenosyl-L-homocysteine + H(+). It functions in the pathway antibiotic biosynthesis; novobiocin biosynthesis. Functionally, C-methyltransferase that methylates 8-demethylnovobiocic acid to produce novobiocic acid in the novobiocin biosynthesis pathway. Novobiocin is an aminocoumarin family antibiotic that targets bacterial DNA gyrases. The polypeptide is 8-demethylnovobiocic acid C(8)-methyltransferase (novO) (Streptomyces niveus (Streptomyces spheroides)).